Consider the following 393-residue polypeptide: SH3 domain-binding protein 5-like (393 aa).

2 disordered regions span residues 1–59 and 272–332; these read MAEL…LDPR and HARR…DTDT. Position 13 is a phosphothreonine (Thr-13). Basic and acidic residues predominate over residues 18–28; sequence LRPEVVEDEVP. Residues Ser-30 and Ser-49 each carry the phosphoserine modification. Coiled coils occupy residues 59 to 140 and 169 to 272; these read RIQE…YERA and WQEM…EQIH. The segment covering 304–313 has biased composition (gly residues); the sequence is GDSGIEGAEG. Residues 317 to 332 are compositionally biased toward low complexity; it reads EEGSSLGPGPAPDTDT. Phosphoserine occurs at positions 343, 350, 358, 362, and 378. Residues 364–393 are disordered; it reads DGQELGTRSGGRRGSDGGVRGGRHQRSVSL. Basic residues predominate over residues 384 to 393; sequence GGRHQRSVSL.

It belongs to the SH3BP5 family.

Its function is as follows. Functions as a guanine nucleotide exchange factor (GEF) for RAB11A. The polypeptide is SH3 domain-binding protein 5-like (SH3BP5L) (Pongo abelii (Sumatran orangutan)).